Reading from the N-terminus, the 200-residue chain is Lipopolysaccharide core heptose(II)-phosphate phosphatase (200 aa).

Residues 1–25 (MLAFCRSSLKSKKYFIILLALAAIA) form the signal peptide.

It belongs to the phosphoglycerate mutase family. Ais subfamily.

It localises to the periplasm. It functions in the pathway bacterial outer membrane biogenesis; lipopolysaccharide metabolism. Functionally, catalyzes the dephosphorylation of heptose(II) of the outer membrane lipopolysaccharide core. This Escherichia coli O7:K1 (strain IAI39 / ExPEC) protein is Lipopolysaccharide core heptose(II)-phosphate phosphatase.